Reading from the N-terminus, the 90-residue chain is MEFEELKSIVEKFFQDQTIVRMNLMLNKEIIVSYNQFEEIIKDGDLTYRYAEKNRTVDFYEYRNNIHSIINYFWKDNKVCIIEIDFWRSR.

This is an uncharacterized protein from Saccharolobus islandicus (Sulfolobus islandicus).